A 712-amino-acid chain; its full sequence is MAEPSFARLFLLFFSFLLIFATYSWVFGPDSGFLFGTRVRKTLGSNRQVHVDHSLEKPHHPLDPLTVREINRVRTILSNHDPGFGSGSATIHSMALDEPEKSRVVQWKKGNKLLSRRAAVVAYWGGQTHEITVDLDSGRVVSDVINRTSGYPILTLNDVFAASQVPLKSLEFNRSIEARGVKFSDLACITPFAGWFGSEEEGRRVIRVQCFTLQGTTNYFMRPLEGLYVTVDLDKLEVIKIIDKGPIPIPKASGTEYRFGVQNKPVHMDRINPISMEQPDGPSFRVEDGHLVKWANWVFHVKADQRAGMIISQATVRDSETGEPRSVMYKGFPSELFVPYMDPEEGWYYKGYMDAGELGLGPTAMPLVPLNDCPRNSYYIDGVFASPDGKPIVQPNMICLFERYAGDISWRHSEILFANADIRESRPKVTLVARMATSVGNYDYIFDWEFQTDGLIRVTVAASGMLMVKGTPYDNVDDLGDREDDAGPLISENVIGVVHDHFITFHLDMDIDGPMNNSLVKVHLEKQRVPTGKSPRKSYLKVKKYIAKTEKDAQIKLSLYDPYEFHIVNPNRKSRVGNPAGYRIVPGGNAASLLDHDDPPQIRGAFTNNQIWVTPYNRSEQYAGGVLIYQSQGDDTLQVWSDRDRSIENKDIVLWYTLGFHHVPCQEDYPVMPTVAASFELKPANFFESNPILGSAPFFEKDLPVCRPFASS.

The first 24 residues, 1–24, serve as a signal peptide directing secretion; the sequence is MAEPSFARLFLLFFSFLLIFATYS. Asn146 and Asn173 each carry an N-linked (GlcNAc...) asparagine glycan. A disulfide bridge connects residues Cys188 and Cys210. Residue 352 to 363 participates in substrate binding; the sequence is YMDAGELGLGPT. Asp354 acts as the Proton acceptor in catalysis. Residues Cys373 and Cys399 are joined by a disulfide bond. 439–444 contributes to the substrate binding site; sequence VGNYDY. Tyr442 (schiff-base intermediate with substrate; via topaquinone) is an active-site residue. 2',4',5'-topaquinone is present on Tyr442. 2 residues coordinate Cu cation: His499 and His501. Residues Asp508, Met509, and Asp510 each contribute to the Mn(2+) site. 2 N-linked (GlcNAc...) asparagine glycosylation sites follow: Asn516 and Asn617. Asp651 and Ile652 together coordinate Mn(2+). Residue His662 coordinates Cu cation.

It belongs to the copper/topaquinone oxidase family. As to quaternary structure, homodimer. Cu cation serves as cofactor. It depends on Zn(2+) as a cofactor. L-topaquinone is required as a cofactor. Requires Mn(2+) as cofactor. Post-translationally, topaquinone (TPQ) is generated by copper-dependent autoxidation of a specific tyrosyl residue. In terms of tissue distribution, mostly expressed in roots, stems and flowers, and, at lower levels, in leaves and cotyledons.

The protein resides in the secreted. The protein localises to the extracellular space. It is found in the apoplast. It carries out the reaction a primary methyl amine + O2 + H2O = an aldehyde + H2O2 + NH4(+). Its pathway is amine and polyamine degradation; putrescine degradation. In terms of biological role, copper amine oxidase that can use putrescine and spermidine as substrates. Required for abscisic acid- (ABA) and polyamine- (PA) and H(2)O(2)-dependent induced nitric oxide (NO) biosynthesis. Involved in ABA signal transduction and in responses to osmotic stress. The chain is Amine oxidase [copper-containing] gamma 1 from Arabidopsis thaliana (Mouse-ear cress).